The following is a 249-amino-acid chain: Ubiquinone/menaquinone biosynthesis C-methyltransferase UbiE (249 aa).

S-adenosyl-L-methionine is bound by residues Thr-74, Asp-93, and 121-122; that span reads DA.

The protein belongs to the class I-like SAM-binding methyltransferase superfamily. MenG/UbiE family.

It catalyses the reaction a 2-demethylmenaquinol + S-adenosyl-L-methionine = a menaquinol + S-adenosyl-L-homocysteine + H(+). The enzyme catalyses a 2-methoxy-6-(all-trans-polyprenyl)benzene-1,4-diol + S-adenosyl-L-methionine = a 5-methoxy-2-methyl-3-(all-trans-polyprenyl)benzene-1,4-diol + S-adenosyl-L-homocysteine + H(+). The protein operates within quinol/quinone metabolism; menaquinone biosynthesis; menaquinol from 1,4-dihydroxy-2-naphthoate: step 2/2. It functions in the pathway cofactor biosynthesis; ubiquinone biosynthesis. Its function is as follows. Methyltransferase required for the conversion of demethylmenaquinol (DMKH2) to menaquinol (MKH2) and the conversion of 2-polyprenyl-6-methoxy-1,4-benzoquinol (DDMQH2) to 2-polyprenyl-3-methyl-6-methoxy-1,4-benzoquinol (DMQH2). The protein is Ubiquinone/menaquinone biosynthesis C-methyltransferase UbiE of Acidiphilium cryptum (strain JF-5).